A 367-amino-acid polypeptide reads, in one-letter code: Succinyl-diaminopimelate desuccinylase (367 aa).

Position 64 (His-64) interacts with Zn(2+). The active site involves Asp-66. Asp-95 lines the Zn(2+) pocket. Glu-125 functions as the Proton acceptor in the catalytic mechanism. Positions 126, 154, and 339 each coordinate Zn(2+).

It belongs to the peptidase M20A family. DapE subfamily. In terms of assembly, homodimer. It depends on Zn(2+) as a cofactor. Requires Co(2+) as cofactor.

It catalyses the reaction N-succinyl-(2S,6S)-2,6-diaminopimelate + H2O = (2S,6S)-2,6-diaminopimelate + succinate. It functions in the pathway amino-acid biosynthesis; L-lysine biosynthesis via DAP pathway; LL-2,6-diaminopimelate from (S)-tetrahydrodipicolinate (succinylase route): step 3/3. Functionally, catalyzes the hydrolysis of N-succinyl-L,L-diaminopimelic acid (SDAP), forming succinate and LL-2,6-diaminopimelate (DAP), an intermediate involved in the bacterial biosynthesis of lysine and meso-diaminopimelic acid, an essential component of bacterial cell walls. This chain is Succinyl-diaminopimelate desuccinylase, found in Sulfurovum sp. (strain NBC37-1).